A 172-amino-acid polypeptide reads, in one-letter code: ATP synthase subunit b (172 aa).

A helical transmembrane segment spans residues L27–E47.

The protein belongs to the ATPase B chain family. In terms of assembly, F-type ATPases have 2 components, F(1) - the catalytic core - and F(0) - the membrane proton channel. F(1) has five subunits: alpha(3), beta(3), gamma(1), delta(1), epsilon(1). F(0) has four main subunits: a(1), b(1), b'(1) and c(10-14). The alpha and beta chains form an alternating ring which encloses part of the gamma chain. F(1) is attached to F(0) by a central stalk formed by the gamma and epsilon chains, while a peripheral stalk is formed by the delta, b and b' chains.

The protein localises to the cellular thylakoid membrane. Its function is as follows. F(1)F(0) ATP synthase produces ATP from ADP in the presence of a proton or sodium gradient. F-type ATPases consist of two structural domains, F(1) containing the extramembraneous catalytic core and F(0) containing the membrane proton channel, linked together by a central stalk and a peripheral stalk. During catalysis, ATP synthesis in the catalytic domain of F(1) is coupled via a rotary mechanism of the central stalk subunits to proton translocation. Component of the F(0) channel, it forms part of the peripheral stalk, linking F(1) to F(0). In Prochlorococcus marinus (strain MIT 9303), this protein is ATP synthase subunit b.